A 206-amino-acid chain; its full sequence is Translocation protein SEC66 (206 aa).

Residues 1-27 (MSEFNETKFSNNGTFFETEEPIVETKS) are Lumenal-facing. 2 N-linked (GlcNAc...) asparagine glycosylation sites follow: Asn5 and Asn12. Residues 28-48 (ISVYTPLIYVFILVVSLVMFA) traverse the membrane as a helical; Signal-anchor for type II membrane protein segment. The Cytoplasmic segment spans residues 49–206 (SSYRKKQAKK…KINNDGRLVN (158 aa)).

To S.pombe SpBC409.21. Component of the heterotetrameric Sec62/63complex composed of SEC62, SEC63, SEC66 and SEC72. The Sec62/63 complex associates with the Sec61 complex to form the Sec complex. Part of a complex consisting of KAR2, SEC63, SEC66 and SEC72.

It is found in the endoplasmic reticulum membrane. Acts as a component of the Sec62/63 complex which is involved in SRP-independent post-translational translocation across the endoplasmic reticulum (ER) and functions together with the Sec61 complex and KAR2 in a channel-forming translocon complex. A cycle of assembly and disassembly of Sec62/63 complex from SEC61 may govern the activity of the translocon. SEC66 is required to attach or retain SEC72 in the SEC63 complex. It is essential for growth at elevated temperatures. This is Translocation protein SEC66 (SEC66) from Saccharomyces cerevisiae (strain ATCC 204508 / S288c) (Baker's yeast).